Consider the following 135-residue polypeptide: Small ribosomal subunit protein bS6 (135 aa).

Residues 99-120 show a composition bias toward polar residues; the sequence is QHSSLGRSTAPANPMASNTPRT. Residues 99 to 135 form a disordered region; sequence QHSSLGRSTAPANPMASNTPRTEGQEQAKTEPQTAPA.

The protein belongs to the bacterial ribosomal protein bS6 family.

Its function is as follows. Binds together with bS18 to 16S ribosomal RNA. The chain is Small ribosomal subunit protein bS6 from Synechococcus sp. (strain RCC307).